We begin with the raw amino-acid sequence, 299 residues long: Oxygen-dependent coproporphyrinogen-III oxidase (299 aa).

Ser-92 provides a ligand contact to substrate. A divalent metal cation contacts are provided by His-96 and His-106. Catalysis depends on His-106, which acts as the Proton donor. 108–110 (NVR) lines the substrate pocket. Residues His-145 and His-175 each coordinate a divalent metal cation. The segment at 240 to 275 (YVEFNLVWDRGTLFGLQTGGRTESILMSMPPLVRWE) is important for dimerization. 258–260 (GGR) contributes to the substrate binding site.

The protein belongs to the aerobic coproporphyrinogen-III oxidase family. As to quaternary structure, homodimer. A divalent metal cation serves as cofactor.

Its subcellular location is the cytoplasm. The enzyme catalyses coproporphyrinogen III + O2 + 2 H(+) = protoporphyrinogen IX + 2 CO2 + 2 H2O. Its pathway is porphyrin-containing compound metabolism; protoporphyrin-IX biosynthesis; protoporphyrinogen-IX from coproporphyrinogen-III (O2 route): step 1/1. Its function is as follows. Involved in the heme biosynthesis. Catalyzes the aerobic oxidative decarboxylation of propionate groups of rings A and B of coproporphyrinogen-III to yield the vinyl groups in protoporphyrinogen-IX. This chain is Oxygen-dependent coproporphyrinogen-III oxidase, found in Enterobacter sp. (strain 638).